Reading from the N-terminus, the 220-residue chain is Putative NAD(P)H nitroreductase (220 aa).

155–160 (GASALG) is an NAD(+) binding site.

Belongs to the nitroreductase family. It depends on FMN as a cofactor.

This is Putative NAD(P)H nitroreductase from Haemophilus influenzae (strain ATCC 51907 / DSM 11121 / KW20 / Rd).